Here is a 510-residue protein sequence, read N- to C-terminus: Protein fork head (510 aa).

2 disordered regions span residues 1–62 (MQKL…SPLA) and 175–205 (AMPP…YRRS). Residues 20 to 39 (SGGGGPPSGGGGGGGGGGGG) show a composition bias toward gly residues. The segment covering 47 to 60 (NNPNPTSNGGSMSP) has biased composition (low complexity). Phosphoserine is present on residues Ser187 and Ser190. Positions 209–300 (AKPPYSYISL…GNMFENGCYL (92 aa)) form a DNA-binding region, fork-head. The disordered stretch occupies residues 309–359 (EKKEAIRQLHKSPSHSSLEATSPGKKDHEDSHHMHHHHHSRLDHHQHHKEA). A phosphoserine mark is found at Ser320, Ser322, and Ser330. Positions 341 to 356 (HMHHHHHSRLDHHQHH) are enriched in basic residues.

It localises to the nucleus. Functionally, fkh promotes terminal as opposed to segmental development. In the absence of fkh, this developmental switch does not occur. The nuclear localization of the fkh protein suggest that fkh regulates the transcription of other, subordinate, genes. The sequence is that of Protein fork head (fkh) from Drosophila melanogaster (Fruit fly).